A 363-amino-acid chain; its full sequence is Chorismate synthase (363 aa).

NADP(+) is bound by residues R48 and R54. FMN contacts are provided by residues 125–127 (RSS), 237–238 (NA), G277, 292–296 (KPTSS), and R318.

Belongs to the chorismate synthase family. Homotetramer. The cofactor is FMNH2.

It carries out the reaction 5-O-(1-carboxyvinyl)-3-phosphoshikimate = chorismate + phosphate. It functions in the pathway metabolic intermediate biosynthesis; chorismate biosynthesis; chorismate from D-erythrose 4-phosphate and phosphoenolpyruvate: step 7/7. Its function is as follows. Catalyzes the anti-1,4-elimination of the C-3 phosphate and the C-6 proR hydrogen from 5-enolpyruvylshikimate-3-phosphate (EPSP) to yield chorismate, which is the branch point compound that serves as the starting substrate for the three terminal pathways of aromatic amino acid biosynthesis. This reaction introduces a second double bond into the aromatic ring system. The protein is Chorismate synthase of Pseudomonas putida (strain ATCC 700007 / DSM 6899 / JCM 31910 / BCRC 17059 / LMG 24140 / F1).